Here is a 1075-residue protein sequence, read N- to C-terminus: Disheveled-associated activator of morphogenesis 2 (1075 aa).

One can recognise a GBD/FH3 domain in the interval 40 to 416 (VPIPPTEELN…QIVLQDERGD (377 aa)). Residues 437–517 (NENEVKQWRD…VAQLNEYSQG (81 aa)) are a coiled coil. 3 disordered regions span residues 517 to 611 (GGSI…IPQP), 1006 to 1025 (KEQR…SISE), and 1048 to 1075 (SKLK…KLNY). A compositionally biased stretch (pro residues) spans 523–532 (PAPPPPPPGG). Over residues 533–544 (PLALSSALSSAL) the composition is skewed to low complexity. Residues 550–581 (PPLPPPLPFSSCPPPPAPPPPPGGPPPPPGAP) are compositionally biased toward pro residues. An FH2 domain is found at 605–1075 (KKSIPQPSHP…RERVVTKLNY (471 aa)). In terms of domain architecture, DAD spans 1025-1075 (EETGEFDDLVSALRSGEVFDKDLSKLKRNRKRSGNQGLETSRERVVTKLNY). The segment covering 1064 to 1075 (TSRERVVTKLNY) has biased composition (basic and acidic residues).

Belongs to the formin homology family. In terms of tissue distribution, expressed in progenitor populations of the embryonic spinal cord (at protein level).

Its function is as follows. Key regulator of the Wnt signaling pathway, which is required for various processes during development, such as dorsal patterning, determination of left/right symmetry or myelination in the central nervous system. Acts downstream of Wnt ligands and upstream of beta-catenin (CTNNB1). Required for canonical Wnt signaling pathway during patterning in the dorsal spinal cord by promoting the aggregation of Disheveled (Dvl) complexes, thereby clustering and formation of Wnt receptor signalosomes and potentiating Wnt activity. During dorsal patterning of the spinal cord, inhibits oligodendrocytes differentiation via interaction with PIP5K1A. Also regulates non-canonical Wnt signaling pathway. Acts downstream of PITX2 in the developing gut and is required for left/right asymmetry within dorsal mesentery: affects mesenchymal condensation by lengthening cadherin-based junctions through WNT5A and non-canonical Wnt signaling, inducing polarized condensation in the left dorsal mesentery necessary to initiate gut rotation. Together with DAAM1, required for myocardial maturation and sarcomere assembly. In Gallus gallus (Chicken), this protein is Disheveled-associated activator of morphogenesis 2.